The sequence spans 66 residues: Alpha-actitoxin-Ms11a-2 (66 aa).

Residues 1-24 form the signal peptide; it reads MASKIFFVLAVFLVMSAVLPESFA. Intrachain disulfides connect cysteine 26–cysteine 41, cysteine 33–cysteine 46, and cysteine 40–cysteine 61.

The protein localises to the secreted. Its subcellular location is the nematocyst. Functionally, alpha-toxins act on postsynaptic membranes, they bind to the nicotinic acetylcholine receptors (nAChR) and thus inhibit them. This toxin competes with alpha-bungarotoxin for binding to orthosteric sites on muscle-type T.carlifornicus (IC(50)=1080 nM) and human alpha-7/CHRNA7 nAChRs (IC(50)=14.13 uM). In Metridium senile (Brown sea anemone), this protein is Alpha-actitoxin-Ms11a-2.